We begin with the raw amino-acid sequence, 359 residues long: Homoserine dehydrogenase (359 aa).

4 residues coordinate NAD(+): A13, V15, V16, and A41. V16 contacts NADP(+). V16 is a binding site for NADPH. 4 residues coordinate NADPH: K60, T93, S94, and K117. T93 serves as a coordination point for NAD(+). T93 provides a ligand contact to NADP(+). K117 contributes to the NADP(+) binding site. The Na(+) site is built by E143, V146, A148, and L150. The NADP(+) site is built by G205 and E208. Residues E208 and D219 each contribute to the L-homoserine site. The active-site Proton donor is K223. A Glycyl lysine isopeptide (Lys-Gly) (interchain with G-Cter in ubiquitin) cross-link involves residue K290. G340 contributes to the NAD(+) binding site. Residue G340 coordinates NADP(+). G340 is a binding site for NADPH.

The protein belongs to the homoserine dehydrogenase family. Homodimer. A metal cation is required as a cofactor.

It catalyses the reaction L-homoserine + NADP(+) = L-aspartate 4-semialdehyde + NADPH + H(+). The enzyme catalyses L-homoserine + NAD(+) = L-aspartate 4-semialdehyde + NADH + H(+). It functions in the pathway amino-acid biosynthesis; L-methionine biosynthesis via de novo pathway; L-homoserine from L-aspartate: step 3/3. Its pathway is amino-acid biosynthesis; L-threonine biosynthesis; L-threonine from L-aspartate: step 3/5. Catalyzes the conversion of L-aspartate-beta-semialdehyde (L-Asa) to L-homoserine (L-Hse), the third step in the biosynthesis of amino acids that derive from aspartate (the aspartate family of amino acids), including methioinine and threonine, the latter of which is a precursor to isoleucine; production of homoserine leads to a branch-point in the pathway as it can either be O-phosphorylated for processing to threonine, or O-acylated for processing to methionine. In Saccharomyces cerevisiae (strain ATCC 204508 / S288c) (Baker's yeast), this protein is Homoserine dehydrogenase (HOM6).